A 31-amino-acid chain; its full sequence is Photosystem II reaction center protein M (31 aa).

The chain crosses the membrane as a helical span at residues 5–25 (ILAFIATALLILVPTAFLLII).

The protein belongs to the PsbM family. PSII is composed of 1 copy each of membrane proteins PsbA, PsbB, PsbC, PsbD, PsbE, PsbF, PsbH, PsbI, PsbJ, PsbK, PsbL, PsbM, PsbT, PsbX, PsbY, PsbZ, Psb30/Ycf12, at least 3 peripheral proteins of the oxygen-evolving complex and a large number of cofactors. It forms dimeric complexes.

The protein localises to the plastid membrane. Functionally, one of the components of the core complex of photosystem II (PSII). PSII is a light-driven water:plastoquinone oxidoreductase that uses light energy to abstract electrons from H(2)O, generating O(2) and a proton gradient subsequently used for ATP formation. It consists of a core antenna complex that captures photons, and an electron transfer chain that converts photonic excitation into a charge separation. This subunit is found at the monomer-monomer interface. The protein is Photosystem II reaction center protein M of Cuscuta exaltata (Tall dodder).